Consider the following 47-residue polypeptide: MAKGKRTFQPNNRRRARVHGFRTRMRTRAGRAIVAARRRKGREKLTA.

The tract at residues 1-28 (MAKGKRTFQPNNRRRARVHGFRTRMRTR) is disordered.

The protein belongs to the bacterial ribosomal protein bL34 family.

This chain is Large ribosomal subunit protein bL34, found in Corynebacterium efficiens (strain DSM 44549 / YS-314 / AJ 12310 / JCM 11189 / NBRC 100395).